The primary structure comprises 126 residues: Copper resistance protein C (126 aa).

The N-terminal stretch at 1–24 is a signal peptide; that stretch reads MLLNRTSFVTLFAAGMLVSALAQA. His-25 is a binding site for Cu(2+). Residues Met-64, Met-67, Met-70, His-72, and Met-75 each contribute to the Cu(+) site. His-115 is a binding site for Cu(2+).

The protein belongs to the CopC family. In terms of assembly, monomer.

The protein localises to the periplasm. Its activity is regulated as follows. The redox state of copper bound to CopC may act as a switch between the possible trafficking pathways of the metal ion. Copper-binding protein involved in copper resistance and homeostasis. Probably mediates copper resistance by sequestering the excess of copper in the periplasm. May act as a copper carrier in the oxidizing periplasmic space that exchanges either Cu(I) or Cu(II) with its putative partners CopA, CopB and CopD. This is Copper resistance protein C from Pseudomonas syringae pv. tomato.